Consider the following 523-residue polypeptide: 2-isopropylmalate synthase (523 aa).

Residues 5-267 (VIIFDTTLRD…ETGINAKEIH (263 aa)) form the Pyruvate carboxyltransferase domain. Asp14, His202, His204, and Asn238 together coordinate Mn(2+). Residues 392 to 523 (GLQQLVVHSD…KQARTELGGV (132 aa)) form a regulatory domain region.

The protein belongs to the alpha-IPM synthase/homocitrate synthase family. LeuA type 1 subfamily. As to quaternary structure, homodimer. It depends on Mn(2+) as a cofactor.

The protein resides in the cytoplasm. The enzyme catalyses 3-methyl-2-oxobutanoate + acetyl-CoA + H2O = (2S)-2-isopropylmalate + CoA + H(+). The protein operates within amino-acid biosynthesis; L-leucine biosynthesis; L-leucine from 3-methyl-2-oxobutanoate: step 1/4. In terms of biological role, catalyzes the condensation of the acetyl group of acetyl-CoA with 3-methyl-2-oxobutanoate (2-ketoisovalerate) to form 3-carboxy-3-hydroxy-4-methylpentanoate (2-isopropylmalate). This Shewanella loihica (strain ATCC BAA-1088 / PV-4) protein is 2-isopropylmalate synthase.